The sequence spans 247 residues: 2,3-bisphosphoglycerate-dependent phosphoglycerate mutase (247 aa).

Substrate-binding positions include 8-15 (RHGESQWN), 21-22 (TG), R60, 87-90 (ERHY), K98, 114-115 (RR), and 183-184 (GN). The Tele-phosphohistidine intermediate role is filled by H9. Residue E87 is the Proton donor/acceptor of the active site.

This sequence belongs to the phosphoglycerate mutase family. BPG-dependent PGAM subfamily.

It carries out the reaction (2R)-2-phosphoglycerate = (2R)-3-phosphoglycerate. The protein operates within carbohydrate degradation; glycolysis; pyruvate from D-glyceraldehyde 3-phosphate: step 3/5. Its function is as follows. Catalyzes the interconversion of 2-phosphoglycerate and 3-phosphoglycerate. This is 2,3-bisphosphoglycerate-dependent phosphoglycerate mutase from Chlorobium phaeobacteroides (strain DSM 266 / SMG 266 / 2430).